We begin with the raw amino-acid sequence, 281 residues long: BURP domain-containing protein BNM2C (281 aa).

An N-terminal signal peptide occupies residues 1–25 (MASLRFSVTFPALFSLLLSLWVVDA). In terms of domain architecture, BURP spans 59–281 (FFKISDLKLG…PLDNIVWVSK (223 aa)).

In terms of tissue distribution, expressed in the radicle of germinating seeds 2 days post-imbibition (DPI) and in roots of 30-DPI young plants. Expressed in the embryo and seed coat tissues of developing seeds. The protein accumulates only in seeds and only long after transcript accumulation becomes evident.

It is found in the protein storage vacuole. The protein is BURP domain-containing protein BNM2C of Brassica napus (Rape).